The following is a 208-amino-acid chain: Uridine kinase (208 aa).

An ATP-binding site is contributed by 12–19; that stretch reads GGSGGGKT.

The protein belongs to the uridine kinase family.

Its subcellular location is the cytoplasm. It carries out the reaction uridine + ATP = UMP + ADP + H(+). The catalysed reaction is cytidine + ATP = CMP + ADP + H(+). Its pathway is pyrimidine metabolism; CTP biosynthesis via salvage pathway; CTP from cytidine: step 1/3. It participates in pyrimidine metabolism; UMP biosynthesis via salvage pathway; UMP from uridine: step 1/1. This Streptococcus pyogenes serotype M3 (strain ATCC BAA-595 / MGAS315) protein is Uridine kinase.